We begin with the raw amino-acid sequence, 456 residues long: Probable hexose phosphate transport protein (456 aa).

A run of 11 helical transmembrane segments spans residues Ile34–Phe54, Leu70–Val90, Ile113–Trp133, Val161–Ile181, Gly185–Ile205, Tyr257–Val277, Leu302–Ser322, Gly331–Thr351, Ala362–Ala382, Ala394–Gly414, and Gly421–Leu441.

This sequence belongs to the major facilitator superfamily. Organophosphate:Pi antiporter (OPA) (TC 2.A.1.4) family.

The protein resides in the cell membrane. In terms of biological role, transport protein for sugar phosphate uptake. The chain is Probable hexose phosphate transport protein from Chlamydia muridarum (strain MoPn / Nigg).